Here is a 723-residue protein sequence, read N- to C-terminus: Polyribonucleotide nucleotidyltransferase (723 aa).

Positions 488 and 494 each coordinate Mg(2+). One can recognise a KH domain in the interval 555 to 614 (PKIITLNIKPEKIKDVIGPGGKQINAIIDETGVKIDIEQDGTVYIASQDQAMNRKAIAII). Residues 624–692 (GEVYTGKVRR…QQGRVNLSRK (69 aa)) form the S1 motif domain. The disordered stretch occupies residues 692–723 (KALLEKKEQPEGDKKPQAEKKFYPKTKKPESK). Positions 693–723 (ALLEKKEQPEGDKKPQAEKKFYPKTKKPESK) are enriched in basic and acidic residues.

It belongs to the polyribonucleotide nucleotidyltransferase family. Mg(2+) serves as cofactor.

The protein localises to the cytoplasm. It carries out the reaction RNA(n+1) + phosphate = RNA(n) + a ribonucleoside 5'-diphosphate. Functionally, involved in mRNA degradation. Catalyzes the phosphorolysis of single-stranded polyribonucleotides processively in the 3'- to 5'-direction. The protein is Polyribonucleotide nucleotidyltransferase of Listeria monocytogenes serovar 1/2a (strain ATCC BAA-679 / EGD-e).